Here is a 353-residue protein sequence, read N- to C-terminus: Photosystem II protein D1 (353 aa).

N-acetylthreonine is present on T2. T2 carries the post-translational modification Phosphothreonine. The next 3 helical transmembrane spans lie at 29–46 (YIGWFGVLMIPTLLTATS), 118–133 (HFLLGVACYMGREWEL), and 142–156 (WIAVAYSAPVAAATA). H118 is a chlorophyll a binding site. Y126 contributes to the pheophytin a binding site. D170 and E189 together coordinate [CaMn4O5] cluster. Residues 197 to 218 (FHMLGVAGVFGGSLFSAMHGSL) form a helical membrane-spanning segment. Position 198 (H198) interacts with chlorophyll a. Residues H215 and 264–265 (SF) each bind a quinone. H215 contacts Fe cation. H272 serves as a coordination point for Fe cation. Residues 274-288 (FLAAWPVVGIWFTAL) traverse the membrane as a helical segment. [CaMn4O5] cluster-binding residues include H332, E333, D342, and A344. The propeptide occupies 345–353 (GVEVPSTNG).

It belongs to the reaction center PufL/M/PsbA/D family. As to quaternary structure, PSII is composed of 1 copy each of membrane proteins PsbA, PsbB, PsbC, PsbD, PsbE, PsbF, PsbH, PsbI, PsbJ, PsbK, PsbL, PsbM, PsbT, PsbX, PsbY, PsbZ, Psb30/Ycf12, at least 3 peripheral proteins of the oxygen-evolving complex and a large number of cofactors. It forms dimeric complexes. Requires The D1/D2 heterodimer binds P680, chlorophylls that are the primary electron donor of PSII, and subsequent electron acceptors. It shares a non-heme iron and each subunit binds pheophytin, quinone, additional chlorophylls, carotenoids and lipids. D1 provides most of the ligands for the Mn4-Ca-O5 cluster of the oxygen-evolving complex (OEC). There is also a Cl(-1) ion associated with D1 and D2, which is required for oxygen evolution. The PSII complex binds additional chlorophylls, carotenoids and specific lipids. as cofactor. In terms of processing, tyr-161 forms a radical intermediate that is referred to as redox-active TyrZ, YZ or Y-Z. Post-translationally, C-terminally processed by CTPA; processing is essential to allow assembly of the oxygen-evolving complex and thus photosynthetic growth.

It is found in the plastid. The protein resides in the chloroplast thylakoid membrane. The enzyme catalyses 2 a plastoquinone + 4 hnu + 2 H2O = 2 a plastoquinol + O2. Photosystem II (PSII) is a light-driven water:plastoquinone oxidoreductase that uses light energy to abstract electrons from H(2)O, generating O(2) and a proton gradient subsequently used for ATP formation. It consists of a core antenna complex that captures photons, and an electron transfer chain that converts photonic excitation into a charge separation. The D1/D2 (PsbA/PsbD) reaction center heterodimer binds P680, the primary electron donor of PSII as well as several subsequent electron acceptors. The polypeptide is Photosystem II protein D1 (Morus indica (Mulberry)).